A 424-amino-acid chain; its full sequence is Tyrosine--tRNA ligase (424 aa).

Tyrosine 37 serves as a coordination point for L-tyrosine. Residues 42–51 carry the 'HIGH' region motif; the sequence is PTADSLHLGH. Lysine 144 carries the post-translational modification N6-acetyllysine. L-tyrosine is bound by residues tyrosine 175 and glutamine 179. A 'KMSKS' region motif is present at residues 235–239; that stretch reads KFGKT. Lysine 238 is an ATP binding site. The region spanning 357-414 is the S4 RNA-binding domain; it reads ADLMQALVDSELQPSRGQARKTIASNAITINGEKQSDPEYFFKEEDRLFGRFTLLRRG.

This sequence belongs to the class-I aminoacyl-tRNA synthetase family. TyrS type 1 subfamily. Homodimer.

It localises to the cytoplasm. The enzyme catalyses tRNA(Tyr) + L-tyrosine + ATP = L-tyrosyl-tRNA(Tyr) + AMP + diphosphate + H(+). Its function is as follows. Catalyzes the attachment of tyrosine to tRNA(Tyr) in a two-step reaction: tyrosine is first activated by ATP to form Tyr-AMP and then transferred to the acceptor end of tRNA(Tyr). In Shigella dysenteriae serotype 1 (strain Sd197), this protein is Tyrosine--tRNA ligase.